Reading from the N-terminus, the 839-residue chain is Probable beta-glucosidase I (839 aa).

Residue Asn-197 is glycosylated (N-linked (GlcNAc...) asparagine). Residue Asp-225 is part of the active site. A PA14 domain is found at 395–555 (DGKTGFSFKV…GQEELISNAV (161 aa)). An N-linked (GlcNAc...) asparagine glycan is attached at Asn-620.

Belongs to the glycosyl hydrolase 3 family.

The protein resides in the secreted. The enzyme catalyses Hydrolysis of terminal, non-reducing beta-D-glucosyl residues with release of beta-D-glucose.. It participates in glycan metabolism; cellulose degradation. Its function is as follows. Beta-glucosidases are one of a number of cellulolytic enzymes involved in the degradation of cellulosic biomass. Catalyzes the last step releasing glucose from the inhibitory cellobiose. The polypeptide is Probable beta-glucosidase I (bglI) (Aspergillus flavus (strain ATCC 200026 / FGSC A1120 / IAM 13836 / NRRL 3357 / JCM 12722 / SRRC 167)).